Reading from the N-terminus, the 319-residue chain is GTP 3',8-cyclase (319 aa).

Positions 4–219 (KHGRKINYLR…SKHSDLIPVE (216 aa)) constitute a Radical SAM core domain. A GTP-binding site is contributed by Arg13. Cys20 and Cys24 together coordinate [4Fe-4S] cluster. Tyr26 lines the S-adenosyl-L-methionine pocket. A [4Fe-4S] cluster-binding site is contributed by Cys27. A GTP-binding site is contributed by Arg63. S-adenosyl-L-methionine is bound at residue Gly67. Thr94 is a GTP binding site. Ser118 is an S-adenosyl-L-methionine binding site. Lys155 is a binding site for GTP. Met189 serves as a coordination point for S-adenosyl-L-methionine. Positions 249 and 252 each coordinate [4Fe-4S] cluster. 254–256 (RVR) lines the GTP pocket. Cys266 contributes to the [4Fe-4S] cluster binding site.

The protein belongs to the radical SAM superfamily. MoaA family. As to quaternary structure, monomer and homodimer. It depends on [4Fe-4S] cluster as a cofactor.

It catalyses the reaction GTP + AH2 + S-adenosyl-L-methionine = (8S)-3',8-cyclo-7,8-dihydroguanosine 5'-triphosphate + 5'-deoxyadenosine + L-methionine + A + H(+). The protein operates within cofactor biosynthesis; molybdopterin biosynthesis. Catalyzes the cyclization of GTP to (8S)-3',8-cyclo-7,8-dihydroguanosine 5'-triphosphate. This chain is GTP 3',8-cyclase, found in Clostridium botulinum (strain Okra / Type B1).